A 327-amino-acid polypeptide reads, in one-letter code: Lipoyl synthase (327 aa).

[4Fe-4S] cluster contacts are provided by Cys74, Cys79, Cys85, Cys100, Cys104, Cys107, and Ser314. In terms of domain architecture, Radical SAM core spans 86–303 (FSGGTATFMI…AEEGEKMGFK (218 aa)).

Belongs to the radical SAM superfamily. Lipoyl synthase family. It depends on [4Fe-4S] cluster as a cofactor.

The protein localises to the cytoplasm. It catalyses the reaction [[Fe-S] cluster scaffold protein carrying a second [4Fe-4S](2+) cluster] + N(6)-octanoyl-L-lysyl-[protein] + 2 oxidized [2Fe-2S]-[ferredoxin] + 2 S-adenosyl-L-methionine + 4 H(+) = [[Fe-S] cluster scaffold protein] + N(6)-[(R)-dihydrolipoyl]-L-lysyl-[protein] + 4 Fe(3+) + 2 hydrogen sulfide + 2 5'-deoxyadenosine + 2 L-methionine + 2 reduced [2Fe-2S]-[ferredoxin]. It functions in the pathway protein modification; protein lipoylation via endogenous pathway; protein N(6)-(lipoyl)lysine from octanoyl-[acyl-carrier-protein]: step 2/2. Its function is as follows. Catalyzes the radical-mediated insertion of two sulfur atoms into the C-6 and C-8 positions of the octanoyl moiety bound to the lipoyl domains of lipoate-dependent enzymes, thereby converting the octanoylated domains into lipoylated derivatives. The polypeptide is Lipoyl synthase (Pseudomonas aeruginosa (strain LESB58)).